Consider the following 146-residue polypeptide: MORN repeat-containing protein 4 (146 aa).

4 MORN repeats span residues 16–38 (YRGE…DGGT), 39–61 (YLGH…DGSR), 62–84 (YEGE…DNMT), and 85–107 (FEGE…DGSH).

As to quaternary structure, interacts with MYO3A.

Its subcellular location is the cytoplasm. The protein resides in the cell projection. It localises to the filopodium tip. The protein localises to the stereocilium. Its function is as follows. Plays a role in promoting axonal degeneration following neuronal injury by toxic insult or trauma. The sequence is that of MORN repeat-containing protein 4 (Morn4) from Rattus norvegicus (Rat).